The chain runs to 186 residues: Transcription factor FapR (186 aa).

The protein belongs to the FapR family.

In terms of biological role, transcriptional factor involved in regulation of membrane lipid biosynthesis by repressing genes involved in fatty acid and phospholipid metabolism. This Staphylococcus epidermidis (strain ATCC 35984 / DSM 28319 / BCRC 17069 / CCUG 31568 / BM 3577 / RP62A) protein is Transcription factor FapR.